Reading from the N-terminus, the 353-residue chain is Mitochondrial distribution and morphology protein 12 (353 aa).

The SMP-LTD domain maps to 1–330 (MSFDIKWENL…WPSWICLDMN (330 aa)). Acidic residues-rich tracts occupy residues 64–75 (DEFYEDTTDSPE), 84–103 (TGDD…DDDG), and 330–342 (NDDD…EENP). Disordered regions lie at residues 64–140 (DEFY…NRSR) and 330–353 (NDDD…HVGS).

It belongs to the MDM12 family. In terms of assembly, component of the ER-mitochondria encounter structure (ERMES) or MDM complex, composed of MMM1, MDM10, MDM12 and MDM34. An MMM1 homodimer associates with one molecule of MDM12 on each side in a pairwise head-to-tail manner, and the SMP-LTD domains of MMM1 and MDM12 generate a continuous hydrophobic tunnel for phospholipid trafficking.

The protein resides in the mitochondrion outer membrane. The protein localises to the endoplasmic reticulum membrane. In terms of biological role, component of the ERMES/MDM complex, which serves as a molecular tether to connect the endoplasmic reticulum (ER) and mitochondria. Components of this complex are involved in the control of mitochondrial shape and protein biogenesis, and function in nonvesicular lipid trafficking between the ER and mitochondria. MDM12 is required for the interaction of the ER-resident membrane protein MMM1 and the outer mitochondrial membrane-resident beta-barrel protein MDM10. The MDM12-MMM1 subcomplex functions in the major beta-barrel assembly pathway that is responsible for biogenesis of all mitochondrial outer membrane beta-barrel proteins, and acts in a late step after the SAM complex. The MDM10-MDM12-MMM1 subcomplex further acts in the TOM40-specific pathway after the action of the MDM12-MMM1 complex. Essential for establishing and maintaining the structure of mitochondria and maintenance of mtDNA nucleoids. The protein is Mitochondrial distribution and morphology protein 12 of Candida tropicalis (strain ATCC MYA-3404 / T1) (Yeast).